The sequence spans 867 residues: Glucans biosynthesis glucosyltransferase H (867 aa).

The interval 71-91 is disordered; that stretch reads DDEGRTQLETMPKATRSSISP. 6 helical membrane-spanning segments follow: residues 139 to 156, 194 to 216, 518 to 540, 568 to 590, 603 to 625, and 680 to 702; these read YILL…TWYM, ILIL…LMGF, VMSY…LQVV, IALL…LLIW, VTIS…MLFH, and FLFW…VFSS.

It belongs to the glycosyltransferase 2 family. OpgH subfamily.

The protein resides in the cell inner membrane. It participates in glycan metabolism; osmoregulated periplasmic glucan (OPG) biosynthesis. Its function is as follows. Involved in the biosynthesis of osmoregulated periplasmic glucans (OPGs). The sequence is that of Glucans biosynthesis glucosyltransferase H from Nitrosomonas europaea (strain ATCC 19718 / CIP 103999 / KCTC 2705 / NBRC 14298).